The chain runs to 175 residues: Alpha-crystallin B chain (175 aa).

N-acetylmethionine is present on Met-1. A phosphoserine mark is found at Ser-19, Ser-45, and Ser-59. In terms of domain architecture, sHSP spans 56–164 (RAPSWIDTGL…PERTIPITRE (109 aa)). His-83 contacts Zn(2+). Residue Lys-92 is modified to N6-acetyllysine. 4 residues coordinate Zn(2+): His-104, Glu-106, His-111, and His-119. The interval 145–175 (VNGPRKQASGPERTIPITREEKPAVTAAPKK) is disordered. Lys-166 carries the post-translational modification N6-acetyllysine. An O-linked (GlcNAc) threonine glycan is attached at Thr-170.

It belongs to the small heat shock protein (HSP20) family. Heteromer composed of three CRYAA and one CRYAB subunits. Aggregates with homologous proteins, including the small heat shock protein HSPB1, to form large heteromeric complexes. Inter-subunit bridging via zinc ions enhances stability, which is crucial as there is no protein turn over in the lens. Interacts with HSPBAP1 and TTN/titin. Interacts with TMEM109; in the cellular response to DNA damage. Interacts with DES; binds rapidly during early stages of DES filament assembly and a reduced binding seen in the later stages. Interacts with TMED10; the interaction mediates the translocation from the cytoplasm into the ERGIC (endoplasmic reticulum-Golgi intermediate compartment) and thereby secretion. Interacts with ATP6V1A and with MTOR, forming a ternary complex. As to expression, lens as well as other tissues.

Its subcellular location is the cytoplasm. The protein resides in the nucleus. It localises to the secreted. The protein localises to the lysosome. May contribute to the transparency and refractive index of the lens. Has chaperone-like activity, preventing aggregation of various proteins under a wide range of stress conditions. In lens epithelial cells, stabilizes the ATP6V1A protein, preventing its degradation by the proteasome. The protein is Alpha-crystallin B chain (CRYAB) of Mesocricetus auratus (Golden hamster).